The sequence spans 516 residues: Arginyl-tRNA--protein transferase 1 (516 aa).

Residues 150-180 (IESEEKEKEKSIKKEGSKEFIHPQSIEEKLG) are compositionally biased toward basic and acidic residues. Residues 150 to 206 (IESEEKEKEKSIKKEGSKEFIHPQSIEEKLGSGEPSHPIKVHIGPKPGKGADLSKPP) form a disordered region.

It belongs to the R-transferase family. As to quaternary structure, monomer. Interacts with LIAT1; LIAT1 is not a substrate of ATE1, the interaction takes place in the cytoplasm and seems to increase ATE1 arginyltransferase activity. In terms of assembly, interacts with LIAT1; has a higher affinity than the other isoforms. In terms of tissue distribution, widely expressed.

Its subcellular location is the nucleus. The protein resides in the cytoplasm. The catalysed reaction is an N-terminal L-alpha-aminoacyl-[protein] + L-arginyl-tRNA(Arg) = an N-terminal L-arginyl-L-aminoacyl-[protein] + tRNA(Arg) + H(+). Involved in the post-translational conjugation of arginine to the N-terminal aspartate or glutamate of a protein. This arginylation is required for degradation of the protein via the ubiquitin pathway. Does not arginylate cysteine residues. This is Arginyl-tRNA--protein transferase 1 from Mus musculus (Mouse).